The following is a 349-amino-acid chain: Heat-inducible transcription repressor HrcA (349 aa).

The protein belongs to the HrcA family.

Functionally, negative regulator of class I heat shock genes (grpE-dnaK-dnaJ and groELS operons). Prevents heat-shock induction of these operons. The protein is Heat-inducible transcription repressor HrcA of Mycoplasmoides gallisepticum (strain R(low / passage 15 / clone 2)) (Mycoplasma gallisepticum).